The sequence spans 230 residues: Protein GrpE (230 aa).

Disordered regions lie at residues 1–26 (MADE…DREA) and 209–230 (GVSK…EDNA). Residues 221 to 230 (NGASTSEDNA) are compositionally biased toward polar residues.

Belongs to the GrpE family. As to quaternary structure, homodimer.

It is found in the cytoplasm. Participates actively in the response to hyperosmotic and heat shock by preventing the aggregation of stress-denatured proteins, in association with DnaK and GrpE. It is the nucleotide exchange factor for DnaK and may function as a thermosensor. Unfolded proteins bind initially to DnaJ; upon interaction with the DnaJ-bound protein, DnaK hydrolyzes its bound ATP, resulting in the formation of a stable complex. GrpE releases ADP from DnaK; ATP binding to DnaK triggers the release of the substrate protein, thus completing the reaction cycle. Several rounds of ATP-dependent interactions between DnaJ, DnaK and GrpE are required for fully efficient folding. In Brucella suis biovar 1 (strain 1330), this protein is Protein GrpE.